The following is a 635-amino-acid chain: Dihydrolipoyllysine-residue acetyltransferase component of pyruvate dehydrogenase complex, mitochondrial (635 aa).

The region spanning 83–160 (GKEITMPALS…EINKPIAIIV (78 aa)) is the Lipoyl-binding 1 domain. Lys-124 carries the N6-lipoyllysine modification. The disordered stretch occupies residues 171-204 (KNYKPSSQASSTPVQEEAPKPKQEAPKKSTKTYP). Residues 174 to 184 (KPSSQASSTPV) show a composition bias toward polar residues. Residues 187 to 197 (EAPKPKQEAPK) are compositionally biased toward basic and acidic residues. A Lipoyl-binding 2 domain is found at 206–283 (HKVVGMPALS…QINQPVCIIV (78 aa)). Lys-247 is modified (N6-lipoyllysine). The tract at residues 295–338 (YSVEEQSSSSSSSSQESTPSSSSSSSQESTPSQSSSQQTTRKSG) is disordered. Low complexity predominate over residues 298-334 (EEQSSSSSSSSQESTPSSSSSSSQESTPSQSSSQQTT). Positions 342 to 379 (FATPAARFEASSKGYDLSAINGTGPNNRILKADVLEFV) constitute a Peripheral subunit-binding (PSBD) domain. The segment at 382–413 (KQEVAQQQQQQTTTTTKKPTTPTSSGEFTDIP) is disordered. Positions 387–404 (QQQQQQTTTTTKKPTTPT) are enriched in low complexity. Residues 403–635 (PTSSGEFTDI…YVENPIKLIL (233 aa)) are catalytic.

Belongs to the 2-oxoacid dehydrogenase family. As to quaternary structure, 20 to 30 alpha(2)-beta(2) tetramers of E1 + 6 homodimers of E3 + 60 copies of E2. (R)-lipoate is required as a cofactor.

The protein localises to the mitochondrion matrix. It carries out the reaction N(6)-[(R)-dihydrolipoyl]-L-lysyl-[protein] + acetyl-CoA = N(6)-[(R)-S(8)-acetyldihydrolipoyl]-L-lysyl-[protein] + CoA. Functionally, the pyruvate dehydrogenase complex catalyzes the overall conversion of pyruvate to acetyl-CoA and CO(2). It contains multiple copies of three enzymatic components: pyruvate dehydrogenase (E1), dihydrolipoamide acetyltransferase (E2) and lipoamide dehydrogenase (E3). This is Dihydrolipoyllysine-residue acetyltransferase component of pyruvate dehydrogenase complex, mitochondrial (pdhC) from Dictyostelium discoideum (Social amoeba).